Consider the following 368-residue polypeptide: Isocitrate dehydrogenase [NAD] subunit 2, mitochondrial (368 aa).

Residues 1 to 14 constitute a mitochondrion transit peptide; that stretch reads MFRQSIVKQSCRFL. Positions 118, 128, 149, and 236 each coordinate substrate. Positions 236, 262, and 266 each coordinate Mg(2+).

The protein belongs to the isocitrate and isopropylmalate dehydrogenases family. Octamer of two non-identical subunits IDH1 and IDH2. Requires Mg(2+) as cofactor. The cofactor is Mn(2+).

It is found in the mitochondrion. The catalysed reaction is D-threo-isocitrate + NAD(+) = 2-oxoglutarate + CO2 + NADH. Functionally, performs an essential role in the oxidative function of the citric acid cycle. This Kluyveromyces lactis (strain ATCC 8585 / CBS 2359 / DSM 70799 / NBRC 1267 / NRRL Y-1140 / WM37) (Yeast) protein is Isocitrate dehydrogenase [NAD] subunit 2, mitochondrial (IDH2).